We begin with the raw amino-acid sequence, 298 residues long: 5'-AMP-activated protein kinase subunit beta (298 aa).

The segment at 1–98 (MGNVQSQEGE…KTHQPYSGPC (98 aa)) is disordered. A compositionally biased stretch (polar residues) spans 19–30 (QDATTTPDNANN). Positions 48–59 (LNQEGEMSDDNQ) are enriched in acidic residues. A compositionally biased stretch (polar residues) spans 60–77 (QEGGNNRTSQNGTSGSSG). Positions 78–91 (HTKRRSQTSGKKTH) are enriched in basic residues. 250 to 252 (DQS) is an ADP binding site.

The protein belongs to the 5'-AMP-activated protein kinase beta subunit family. AMPK is a heterotrimer of an alpha catalytic subunit (ssp2), a beta (amk2) and a gamma non-catalytic subunits (cbs2). The beta subunit serves as a bridge between the catalytic and the regulatory subunit.

It localises to the cytoplasm. Functionally, beta subunit of AMP-activated protein kinase (AMPK), which is required for transcriptional, metabolic, and developmental adaptations in response to glucose limitation. Has a structural role, mediating heterotrimer formation, and a regulatory role, defining carbon source-regulated subcellular location and substrate specificity of the AMPK kinase complex. This is 5'-AMP-activated protein kinase subunit beta (amk2) from Schizosaccharomyces pombe (strain 972 / ATCC 24843) (Fission yeast).